Reading from the N-terminus, the 249-residue chain is Adenylate kinase (249 aa).

Residue 43–48 coordinates ATP; the sequence is GAGKGT. The NMP stretch occupies residues 63-92; that stretch reads ATGDMLRAQVAAKTALGVEAKKIMDQGGLV. AMP is bound by residues T64, R69, 90-92, 119-122, and Q126; these read GLV and GFPR. Residues 160–197 form an LID region; sequence GRLVHPASGRSYHKLFNPPKKNMIDDITGEPLVQRSDD. Residues R161 and 170–171 each bind ATP; that span reads SY. AMP is bound by residues R194 and R205. An ATP-binding site is contributed by Q233.

The protein belongs to the adenylate kinase family. AK2 subfamily. Monomer.

The protein localises to the cytoplasm. The protein resides in the cytosol. Its subcellular location is the mitochondrion intermembrane space. It catalyses the reaction AMP + ATP = 2 ADP. Its function is as follows. Catalyzes the reversible transfer of the terminal phosphate group between ATP and AMP. Plays an important role in cellular energy homeostasis and in adenine nucleotide metabolism. Adenylate kinase activity is critical for regulation of the phosphate utilization and the AMP de novo biosynthesis pathways. The sequence is that of Adenylate kinase from Scheffersomyces stipitis (strain ATCC 58785 / CBS 6054 / NBRC 10063 / NRRL Y-11545) (Yeast).